Reading from the N-terminus, the 330-residue chain is Probable cytosolic iron-sulfur protein assembly protein ciao1-A (330 aa).

7 WD repeats span residues 14–53 (HPDS…WECK), 59–98 (GHQR…FECL), 103–142 (GHEN…EYEC), 148–187 (SHTQ…WECR), 192–231 (GHTS…GGQD), 243–282 (FHGR…DPDQ), and 294–330 (AHSQ…QSEV).

It belongs to the WD repeat CIA1 family. Component of the CIA complex.

Functionally, key component of the cytosolic iron-sulfur protein assembly (CIA) complex, a multiprotein complex that mediates the incorporation of iron-sulfur cluster into extramitochondrial Fe/S proteins. This is Probable cytosolic iron-sulfur protein assembly protein ciao1-A (ciao1a) from Salmo salar (Atlantic salmon).